The following is a 356-amino-acid chain: Arginine kinase 1 (356 aa).

Residues Val6–Gly91 enclose the Phosphagen kinase N-terminal domain. Position 64 to 68 (Gly64 to Tyr68) interacts with substrate. The region spanning Tyr119–Leu356 is the Phosphagen kinase C-terminal domain. Residues Ser122–Arg126 and His185 contribute to the ATP site. Glu225 serves as a coordination point for substrate. Residue Arg229 participates in ATP binding. Cys271 serves as a coordination point for substrate. Residues Arg280–His284 and Arg309–Glu314 contribute to the ATP site. Residue Glu314 coordinates substrate.

This sequence belongs to the ATP:guanido phosphotransferase family.

The enzyme catalyses L-arginine + ATP = N(omega)-phospho-L-arginine + ADP + H(+). This is Arginine kinase 1 from Drosophila melanogaster (Fruit fly).